The sequence spans 700 residues: Translation initiation factor IF-2 (700 aa).

Residues 58–85 (KKEVKKQKEPSKEKGKSSEQVKVKEKSK) are disordered. Positions 191 to 365 (PRPPVVTIMG…EMQEIRCIPD (175 aa)) constitute a tr-type G domain. The tract at residues 200-207 (GHVDHGKT) is G1. 200-207 (GHVDHGKT) contributes to the GTP binding site. The interval 225–229 (GITQS) is G2. Residues 246–249 (DTPG) form a G3 region. GTP is bound by residues 246–250 (DTPGH) and 300–303 (NKID). Residues 300–303 (NKID) form a G4 region. The segment at 337 to 339 (SAK) is G5.

It belongs to the TRAFAC class translation factor GTPase superfamily. Classic translation factor GTPase family. IF-2 subfamily.

The protein localises to the cytoplasm. Functionally, one of the essential components for the initiation of protein synthesis. Protects formylmethionyl-tRNA from spontaneous hydrolysis and promotes its binding to the 30S ribosomal subunits. Also involved in the hydrolysis of GTP during the formation of the 70S ribosomal complex. The polypeptide is Translation initiation factor IF-2 (Petrotoga mobilis (strain DSM 10674 / SJ95)).